A 346-amino-acid polypeptide reads, in one-letter code: Ribonucleoside-diphosphate reductase subunit beta (346 aa).

3 residues coordinate Fe cation: Glu89, Glu120, and His123. The active site involves Tyr129. Positions 193, 227, and 230 each coordinate Fe cation.

This sequence belongs to the ribonucleoside diphosphate reductase small chain family. Tetramer of two alpha and two beta subunits. The cofactor is Fe cation.

It carries out the reaction a 2'-deoxyribonucleoside 5'-diphosphate + [thioredoxin]-disulfide + H2O = a ribonucleoside 5'-diphosphate + [thioredoxin]-dithiol. Provides the precursors necessary for DNA synthesis. Catalyzes the biosynthesis of deoxyribonucleotides from the corresponding ribonucleotides. The chain is Ribonucleoside-diphosphate reductase subunit beta (nrdB) from Chlamydia muridarum (strain MoPn / Nigg).